The primary structure comprises 732 residues: Prolyl tripeptidyl peptidase (732 aa).

The signal sequence occupies residues methionine 1 to alanine 24. Residues serine 603, aspartate 678, and histidine 710 each act as charge relay system in the active site.

This sequence belongs to the peptidase S9B family. Post-translationally, the N-terminus is blocked.

The enzyme catalyses Hydrolysis of Xaa-Xaa-Pro-|-Yaa- releasing the N-terminal tripeptide of a peptide with Pro as the third residue (position P1) and where Yaa is not proline.. With respect to regulation, strongly inhibited by diisopropyl fluorophosphate and Pefabloc. Weakly inhibited by 3,4-dichloroisocumarin. Not inhibited by phenylmethylsulfonyl fluoride, leupeptin, antipain or prolinal. Activated by iodoacetamide. Functionally, serine proteinase. Releases tripeptides from the free amino terminus of proteins. Has a requirement for Pro in the P1 position, but is inactivated by Pro in the P1' position. The polypeptide is Prolyl tripeptidyl peptidase (Porphyromonas gingivalis (strain ATCC BAA-308 / W83)).